The following is a 184-amino-acid chain: Uroplakin-2 (184 aa).

The first 25 residues, 1–25, serve as a signal peptide directing secretion; it reads MASPLPVRTLPLILILLAVLAPGAS. The propeptide occupies 26–84; it reads DFNISSLSGPLSPALTESLLVALPPCHLTGGNATLMVRRANDSKVVKSSFMVPPCRGRR. N-linked (GlcNAc...) asparagine glycans are attached at residues Asn28, Asn57, and Asn66. The Lumenal portion of the chain corresponds to 85 to 155; that stretch reads ELVSVVDSGS…IGLGMARTGG (71 aa). A helical membrane pass occupies residues 156–180; that stretch reads MVVITVLLSVAMFLLVVGFITALAL. Over 181 to 184 the chain is Cytoplasmic; that stretch reads GARK.

The protein belongs to the uroplakin-2 family. As to quaternary structure, interacts with uroplakin-1a (UPK1A). In terms of tissue distribution, expressed only in the urothelium. Localizes to urothelial superficial cells.

It localises to the cell membrane. Functionally, component of the asymmetric unit membrane (AUM); a highly specialized biomembrane elaborated by terminally differentiated urothelial cells. May play an important role in regulating the assembly of the AUM. In Sus scrofa (Pig), this protein is Uroplakin-2 (UPK2).